The following is a 197-amino-acid chain: Holliday junction branch migration complex subunit RuvA (197 aa).

A domain I region spans residues 1 to 64 (MIARLAGKVA…QDAIELYGFA (64 aa)). A domain II region spans residues 65 to 141 (SEDEEAVFRA…LALLARAAGP (77 aa)). Residues 141–145 (PARAK) are flexible linker. Positions 146–197 (PGAGVVEQLRQALVNLGYKPPQADAAADALRDEAEGKKLDELLREALKRLRG) are domain III.

It belongs to the RuvA family. In terms of assembly, homotetramer. Forms an RuvA(8)-RuvB(12)-Holliday junction (HJ) complex. HJ DNA is sandwiched between 2 RuvA tetramers; dsDNA enters through RuvA and exits via RuvB. An RuvB hexamer assembles on each DNA strand where it exits the tetramer. Each RuvB hexamer is contacted by two RuvA subunits (via domain III) on 2 adjacent RuvB subunits; this complex drives branch migration. In the full resolvosome a probable DNA-RuvA(4)-RuvB(12)-RuvC(2) complex forms which resolves the HJ.

It localises to the cytoplasm. In terms of biological role, the RuvA-RuvB-RuvC complex processes Holliday junction (HJ) DNA during genetic recombination and DNA repair, while the RuvA-RuvB complex plays an important role in the rescue of blocked DNA replication forks via replication fork reversal (RFR). RuvA specifically binds to HJ cruciform DNA, conferring on it an open structure. The RuvB hexamer acts as an ATP-dependent pump, pulling dsDNA into and through the RuvAB complex. HJ branch migration allows RuvC to scan DNA until it finds its consensus sequence, where it cleaves and resolves the cruciform DNA. The chain is Holliday junction branch migration complex subunit RuvA from Anaeromyxobacter sp. (strain Fw109-5).